We begin with the raw amino-acid sequence, 425 residues long: Interferon-activable protein 211 (425 aa).

One can recognise a Pyrin domain in the interval 1–88 (MVNEYKRIVL…AEILKKERSE (88 aa)). The segment covering 86–99 (RSEVTGETSLEKNG) has biased composition (basic and acidic residues). The segment at 86 to 223 (RSEVTGETSL…QNQNIPRGAV (138 aa)) is disordered. Over residues 122 to 153 (TSATQEETSTAQAGTSTAQAGTSTAQAGTSTA) the composition is skewed to low complexity. Repeat copies occupy residues 129-135 (TSTAQAG), 136-142 (TSTAQAG), 143-149 (TSTAQAG), and 150-156 (TSTAQKR). Residues 129 to 177 (TSTAQAGTSTAQAGTSTAQAGTSTAQKRKSMREEETGVKKSKAAKEPDQ) are 4 X 7 AA tandem repeats of T-S-T-A-Q-A-[GR]. The span at 159–176 (MREEETGVKKSKAAKEPD) shows a compositional bias: basic and acidic residues. The segment covering 190-206 (SPILHSSSSASSNILSA) has biased composition (low complexity). Polar residues predominate over residues 207 to 218 (KNQKSQPQNQNI). In terms of domain architecture, HIN-200 spans 213–413 (PQNQNIPRGA…CGDHSFVKVT (201 aa)).

It belongs to the HIN-200 family. Interacts with HOXB2. Mononuclear phagocytes.

The protein resides in the nucleus. Functionally, inhibits cell growth via p53/TP53 and RB1-dependent and independent pathways. May work in synergy with TP53 to promote the transcription of CDKN1A/P21. The chain is Interferon-activable protein 211 from Mus musculus (Mouse).